A 79-amino-acid polypeptide reads, in one-letter code: DNA gyrase inhibitor YacG (79 aa).

Zn(2+) contacts are provided by C7, C10, C26, and C30.

It belongs to the DNA gyrase inhibitor YacG family. Interacts with GyrB. The cofactor is Zn(2+).

In terms of biological role, inhibits all the catalytic activities of DNA gyrase by preventing its interaction with DNA. Acts by binding directly to the C-terminal domain of GyrB, which probably disrupts DNA binding by the gyrase. The protein is DNA gyrase inhibitor YacG of Shewanella halifaxensis (strain HAW-EB4).